We begin with the raw amino-acid sequence, 364 residues long: Heat-inducible transcription repressor HrcA (364 aa).

This sequence belongs to the HrcA family.

Functionally, negative regulator of class I heat shock genes (grpE-dnaK-dnaJ and groELS operons). Prevents heat-shock induction of these operons. This is Heat-inducible transcription repressor HrcA from Cyanothece sp. (strain PCC 7425 / ATCC 29141).